A 436-amino-acid chain; its full sequence is 3-ketoacyl-CoA thiolase (436 aa).

Residue C99 is the Acyl-thioester intermediate of the active site. Catalysis depends on proton acceptor residues H392 and C422.

This sequence belongs to the thiolase-like superfamily. Thiolase family. Heterotetramer of two alpha chains (FadJ) and two beta chains (FadI).

Its subcellular location is the cytoplasm. The enzyme catalyses an acyl-CoA + acetyl-CoA = a 3-oxoacyl-CoA + CoA. It functions in the pathway lipid metabolism; fatty acid beta-oxidation. In terms of biological role, catalyzes the final step of fatty acid oxidation in which acetyl-CoA is released and the CoA ester of a fatty acid two carbons shorter is formed. The chain is 3-ketoacyl-CoA thiolase from Shewanella woodyi (strain ATCC 51908 / MS32).